The chain runs to 197 residues: Xanthine phosphoribosyltransferase (197 aa).

Residues leucine 20 and asparagine 27 each coordinate xanthine. A 5-phospho-alpha-D-ribose 1-diphosphate-binding site is contributed by 128 to 132; that stretch reads ANGQA. Lysine 156 provides a ligand contact to xanthine.

This sequence belongs to the purine/pyrimidine phosphoribosyltransferase family. Xpt subfamily. Homodimer.

The protein localises to the cytoplasm. It catalyses the reaction XMP + diphosphate = xanthine + 5-phospho-alpha-D-ribose 1-diphosphate. It functions in the pathway purine metabolism; XMP biosynthesis via salvage pathway; XMP from xanthine: step 1/1. Functionally, converts the preformed base xanthine, a product of nucleic acid breakdown, to xanthosine 5'-monophosphate (XMP), so it can be reused for RNA or DNA synthesis. The protein is Xanthine phosphoribosyltransferase of Bacillus cereus (strain ZK / E33L).